The primary structure comprises 275 residues: 4-hydroxy-3-methylbut-2-enyl diphosphate reductase (275 aa).

Cysteine 12 is a [4Fe-4S] cluster binding site. (2E)-4-hydroxy-3-methylbut-2-enyl diphosphate contacts are provided by histidine 40 and histidine 70. Positions 40 and 70 each coordinate dimethylallyl diphosphate. The isopentenyl diphosphate site is built by histidine 40 and histidine 70. Cysteine 92 serves as a coordination point for [4Fe-4S] cluster. Histidine 119 contributes to the (2E)-4-hydroxy-3-methylbut-2-enyl diphosphate binding site. Dimethylallyl diphosphate is bound at residue histidine 119. Histidine 119 provides a ligand contact to isopentenyl diphosphate. Residue glutamate 121 is the Proton donor of the active site. Threonine 151 is a (2E)-4-hydroxy-3-methylbut-2-enyl diphosphate binding site. Cysteine 181 is a binding site for [4Fe-4S] cluster. The (2E)-4-hydroxy-3-methylbut-2-enyl diphosphate site is built by serine 209, serine 210, asparagine 211, and serine 251. Positions 209, 210, 211, and 251 each coordinate dimethylallyl diphosphate. Isopentenyl diphosphate-binding residues include serine 209, serine 210, asparagine 211, and serine 251.

This sequence belongs to the IspH family. The cofactor is [4Fe-4S] cluster.

It catalyses the reaction isopentenyl diphosphate + 2 oxidized [2Fe-2S]-[ferredoxin] + H2O = (2E)-4-hydroxy-3-methylbut-2-enyl diphosphate + 2 reduced [2Fe-2S]-[ferredoxin] + 2 H(+). The enzyme catalyses dimethylallyl diphosphate + 2 oxidized [2Fe-2S]-[ferredoxin] + H2O = (2E)-4-hydroxy-3-methylbut-2-enyl diphosphate + 2 reduced [2Fe-2S]-[ferredoxin] + 2 H(+). It participates in isoprenoid biosynthesis; dimethylallyl diphosphate biosynthesis; dimethylallyl diphosphate from (2E)-4-hydroxy-3-methylbutenyl diphosphate: step 1/1. The protein operates within isoprenoid biosynthesis; isopentenyl diphosphate biosynthesis via DXP pathway; isopentenyl diphosphate from 1-deoxy-D-xylulose 5-phosphate: step 6/6. Functionally, catalyzes the conversion of 1-hydroxy-2-methyl-2-(E)-butenyl 4-diphosphate (HMBPP) into a mixture of isopentenyl diphosphate (IPP) and dimethylallyl diphosphate (DMAPP). Acts in the terminal step of the DOXP/MEP pathway for isoprenoid precursor biosynthesis. This is 4-hydroxy-3-methylbut-2-enyl diphosphate reductase from Thermotoga petrophila (strain ATCC BAA-488 / DSM 13995 / JCM 10881 / RKU-1).